Here is a 699-residue protein sequence, read N- to C-terminus: Envelope glycoprotein G (699 aa).

A signal peptide spans 1–22 (MHAIAPRLLLLFVLSGLPGTRG). The Virion surface segment spans residues 23-650 (GSGVPGPINP…WFLTASPALD (628 aa)). N-linked (GlcNAc...) asparagine; by host glycosylation is found at asparagine 104 and asparagine 163. Disordered regions lie at residues 302–390 (PGAL…TTPP) and 403–632 (TPEE…PSGP). Basic and acidic residues predominate over residues 323–336 (LRTDPEGVDPDVRA). The segment covering 348–359 (EDTSSDSPTSAP) has biased composition (polar residues). 2 stretches are compositionally biased toward low complexity: residues 376 to 390 (DPSAEPTAPATTTPP) and 403 to 447 (TPEE…AKTP). N-linked (GlcNAc...) asparagine; by host glycosylation occurs at asparagine 437. Composition is skewed to pro residues over residues 448-459 (PTTPAPTTPPPT) and 467-482 (PTTPGPQTTPPGPATP). The segment covering 483 to 531 (GPVGASAAPTADSPLTASPPATAPGPSAANVSVAATTATPGTRGTARTP) has biased composition (low complexity). A glycan (N-linked (GlcNAc...) asparagine; by host) is linked at asparagine 512. A compositionally biased stretch (pro residues) spans 544 to 554 (DAPPGSPAPPP). Acidic residues predominate over residues 562 to 578 (EEFEGAGDGEPPEDDDS). Pro residues predominate over residues 589–605 (PNKPPPARPGPIRPTLP). A helical membrane pass occupies residues 651–671 (ILFIISTTIHTAAFVCLVALA). Topologically, residues 672–699 (AQLWRGRAGRRRYAHPSVRYVCLPPERD) are intravirion.

This sequence belongs to the alphaherpesvirinae glycoprotein G family.

It localises to the virion membrane. Chemokine-binding protein that inhibits neutrophils' chemotaxis. This Human herpesvirus 2 (strain HG52) (HHV-2) protein is Envelope glycoprotein G (gG).